The sequence spans 399 residues: Proteinase-activated receptor 2 (399 aa).

The first 25 residues, 1-25, serve as a signal peptide directing secretion; that stretch reads MRSLSLAWLLGGITLLAASVSCSRT. A propeptide spans 26–38 (removed for receptor activation); the sequence is ENLAPGRNNSKGR. N-linked (GlcNAc...) asparagine glycosylation occurs at Asn-33. Residues 39-73 lie on the Extracellular side of the membrane; it reads SLIGRLETQPPITGKGVPVEPGFSIDEFSASILTG. A helical membrane pass occupies residues 74–103; that stretch reads KLTTVFLPVVYIIVFVIGLPSNGMALWIFL. Residues 104–110 lie on the Cytoplasmic side of the membrane; sequence FRTKKKH. A helical transmembrane segment spans residues 111–139; it reads PAVIYMANLALADLLSVIWFPLKISYHLH. Residues 140 to 151 lie on the Extracellular side of the membrane; the sequence is GNNWVYGEALCK. Residues Cys-150 and Cys-228 are joined by a disulfide bond. The helical transmembrane segment at 152 to 179 threads the bilayer; it reads VLIGFFYGNMYCSILFMTCLSVQRYWVI. At 180 to 185 the chain is on the cytoplasmic side; it reads VNPMGH. Residues 186-213 traverse the membrane as a helical segment; it reads PRKKANIAVGVSLAIWLLIFLVTIPLYV. At 214 to 237 the chain is on the extracellular side; sequence MKQTIYIPALNITTCHDVLPEEVL. A glycan (N-linked (GlcNAc...) asparagine) is linked at Asn-224. The helical transmembrane segment at 238–271 threads the bilayer; sequence VGDMFNYFLSLAIGVFLFPALLTASAYVLMIKTL. The Cytoplasmic portion of the chain corresponds to 272 to 279; sequence RSSAMDEH. A helical transmembrane segment spans residues 280-319; it reads SEKKRQRAIRLIITVLAMYFICFAPSNLLLVVHYFLIKTQ. At 320–325 the chain is on the extracellular side; that stretch reads RQSHVY. The chain crosses the membrane as a helical span at residues 326–349; sequence ALYLVALCLSTLNSCIDPFVYYFV. Over 350–399 the chain is Cytoplasmic; the sequence is SKDFRDHARNALLCRSVRTVNRMQISLSSNKFSRKSGSYSSSSTSVKTSY. Cys-363 carries S-palmitoyl cysteine lipidation.

Belongs to the G-protein coupled receptor 1 family. In terms of assembly, interacts with TLR4, COPS5 and TMED2. Interacts with GNAQ, GNA11, GNA12, GNA13 and GNA14. A proteolytic cleavage generates a new N-terminus that functions as a tethered ligand. Activating serine proteases include trypsin, mast cell tryptase, coagulation factors VII and Xa, myeloblastin/PRTN3 and membrane-type serine protease 1/ST14. Proposed subsequent cleavage by serine proteases is leading to receptor deactivation and include neutrophil elastase and cathepsin G. At least in part, implicated proteases are also shown to activate the receptor; the glycosylation status of the receptor is thought to contribute to the difference. In terms of processing, N-glycosylated and sialylated. Post-translationally, multiple phosphorylated on serine and threonine residues in the cytoplasmic region upon receptor activation; required for receptor desensitization and recruitment of beta-arrestin. Monoubiquitinated by Cbl at the plasma membrane and in early endosomes; not required for receptor endocytosis but for translocation to late endosomes or lysosomes. Deubiquitination involves Stambp and Usp8; required for lysosomal trafficking and receptor degradation.

The protein resides in the cell membrane. In terms of biological role, receptor for trypsin and trypsin-like enzymes coupled to G proteins. Its function is mediated through the activation of several signaling pathways including phospholipase C (PLC), intracellular calcium, mitogen-activated protein kinase (MAPK), I-kappaB kinase/NF-kappaB and Rho. Can also be transactivated by cleaved F2r/Par1. Involved in modulation of inflammatory responses and regulation of innate and adaptive immunity, and acts as a sensor for proteolytic enzymes generated during infection. Generally is promoting inflammation. Can signal synergistically with Tlr4 and probably Tlr2 in inflammatory responses and modulates Tlr3 signaling. Has a protective role in establishing the endothelial barrier; the activity involves coagulation factor X. Regulates endothelial cell barrier integrity during neutrophil extravasation, probably following proteolytic cleavage by PRTN3. Proposed to have a bronchoprotective role in airway epithelium, but also shown to compromise the airway epithelial barrier by interrupting E-cadherin adhesion. Involved in the regulation of vascular tone; activation results in hypotension presumably mediated by vasodilation. Associates with a subset of G proteins alpha subunits such as GNAQ, GNA11, GNA14, GNA12 and GNA13, but probably not with G(o)-alpha, G(i) subunit alpha-1 and G(i) subunit alpha-2. Believed to be a class B receptor which internalizes as a complex with arrestin and traffic with it to endosomal vesicles, presumably as desensitized receptor, for extended periods of time. Mediates inhibition of TNF-alpha stimulated JNK phosphorylation via coupling to GNAQ and GNA11; the function involves dissociation of Ripk1 and Tradd from Tnfr1. Mediates phosphorylation of nuclear factor NF-kappa-B RELA subunit at 'Ser-536'; the function involves Ikbkb and is predominantly independent of G proteins. Involved in cellular migration. Involved in cytoskeletal rearrangement and chemotaxis through beta-arrestin-promoted scaffolds; the function is independent of GNAQ and GNA11 and involves promotion of cofilin dephosphorylation and actin filament severing. Induces redistribution of Cops5 from the plasma membrane to the cytosol and activation of the JNK cascade is mediated by Cops5. Involved in the recruitment of leukocytes to the sites of inflammation and is the major PAR receptor capable of modulating eosinophil function such as pro-inflammatory cytokine secretion, superoxide production and degranulation. During inflammation promotes dendritic cell maturation, trafficking to the lymph nodes and subsequent T-cell activation. Involved in antimicrobial response of innate immune cells; activation enhances phagocytosis of Gram-positive and killing of Gram-negative bacteria. Acts synergistically with interferon-gamma in enhancing antiviral responses. Mediates activation of pro-inflammatory and pro-fibrotic responses in fibroblasts, triggered by coagulation factor Xa (F10). Probably mediates activation of barrier protective signaling responses in endothelial cells, triggered by coagulation factor Xa (F10). This Mus musculus (Mouse) protein is Proteinase-activated receptor 2 (F2rl1).